Consider the following 325-residue polypeptide: Large ribosomal subunit protein uL1m (325 aa).

Residues 1 to 50 (MAATVRCFGRVLIHHQRCSLATVTSQTSLYPCCIYVPVPNRHFAAAAKPA) constitute a mitochondrion transit peptide. The segment at 47–66 (AKPAKKTKKGTKEKASNEKK) is disordered. The span at 56–66 (GTKEKASNEKK) shows a compositional bias: basic and acidic residues.

It belongs to the universal ribosomal protein uL1 family.

The protein resides in the mitochondrion. The protein is Large ribosomal subunit protein uL1m (MRPL1) of Bos taurus (Bovine).